The sequence spans 375 residues: Succinyl-diaminopimelate desuccinylase (375 aa).

A Zn(2+)-binding site is contributed by His66. Asp68 is a catalytic residue. Asp99 lines the Zn(2+) pocket. The active-site Proton acceptor is the Glu133. Zn(2+)-binding residues include Glu134, Glu162, and His348.

Belongs to the peptidase M20A family. DapE subfamily. As to quaternary structure, homodimer. Zn(2+) is required as a cofactor. Co(2+) serves as cofactor.

It catalyses the reaction N-succinyl-(2S,6S)-2,6-diaminopimelate + H2O = (2S,6S)-2,6-diaminopimelate + succinate. It participates in amino-acid biosynthesis; L-lysine biosynthesis via DAP pathway; LL-2,6-diaminopimelate from (S)-tetrahydrodipicolinate (succinylase route): step 3/3. Its function is as follows. Catalyzes the hydrolysis of N-succinyl-L,L-diaminopimelic acid (SDAP), forming succinate and LL-2,6-diaminopimelate (DAP), an intermediate involved in the bacterial biosynthesis of lysine and meso-diaminopimelic acid, an essential component of bacterial cell walls. The chain is Succinyl-diaminopimelate desuccinylase from Escherichia coli O7:K1 (strain IAI39 / ExPEC).